The following is a 348-amino-acid chain: UDP-3-O-acylglucosamine N-acyltransferase (348 aa).

Histidine 257 acts as the Proton acceptor in catalysis.

The protein belongs to the transferase hexapeptide repeat family. LpxD subfamily. Homotrimer.

The catalysed reaction is a UDP-3-O-[(3R)-3-hydroxyacyl]-alpha-D-glucosamine + a (3R)-hydroxyacyl-[ACP] = a UDP-2-N,3-O-bis[(3R)-3-hydroxyacyl]-alpha-D-glucosamine + holo-[ACP] + H(+). The protein operates within bacterial outer membrane biogenesis; LPS lipid A biosynthesis. Its function is as follows. Catalyzes the N-acylation of UDP-3-O-acylglucosamine using 3-hydroxyacyl-ACP as the acyl donor. Is involved in the biosynthesis of lipid A, a phosphorylated glycolipid that anchors the lipopolysaccharide to the outer membrane of the cell. The protein is UDP-3-O-acylglucosamine N-acyltransferase of Bartonella henselae (strain ATCC 49882 / DSM 28221 / CCUG 30454 / Houston 1) (Rochalimaea henselae).